Consider the following 182-residue polypeptide: Protein Syd (182 aa).

Belongs to the Syd family.

The protein localises to the cell inner membrane. Interacts with the SecY protein in vivo. May bind preferentially to an uncomplexed state of SecY, thus functioning either as a chelating agent for excess SecY in the cell or as a regulatory factor that negatively controls the translocase function. In Pectobacterium carotovorum subsp. carotovorum (strain PC1), this protein is Protein Syd.